Reading from the N-terminus, the 171-residue chain is Flavodoxin (171 aa).

One can recognise a Flavodoxin-like domain in the interval 4-166 (IGLFVGTTTG…RIKEWVKQLK (163 aa)).

This sequence belongs to the flavodoxin family. The cofactor is FMN.

Low-potential electron donor to a number of redox enzymes. The polypeptide is Flavodoxin (fld) (Trichodesmium erythraeum (strain IMS101)).